The following is a 158-amino-acid chain: 6,7-dimethyl-8-ribityllumazine synthase (158 aa).

Residues F22, 56–58 (ALE), and 80–82 (VVI) each bind 5-amino-6-(D-ribitylamino)uracil. 85 to 86 (ET) provides a ligand contact to (2S)-2-hydroxy-3-oxobutyl phosphate. H88 functions as the Proton donor in the catalytic mechanism. Position 113 (N113) interacts with 5-amino-6-(D-ribitylamino)uracil. Residue R127 participates in (2S)-2-hydroxy-3-oxobutyl phosphate binding.

The protein belongs to the DMRL synthase family.

The enzyme catalyses (2S)-2-hydroxy-3-oxobutyl phosphate + 5-amino-6-(D-ribitylamino)uracil = 6,7-dimethyl-8-(1-D-ribityl)lumazine + phosphate + 2 H2O + H(+). Its pathway is cofactor biosynthesis; riboflavin biosynthesis; riboflavin from 2-hydroxy-3-oxobutyl phosphate and 5-amino-6-(D-ribitylamino)uracil: step 1/2. Its function is as follows. Catalyzes the formation of 6,7-dimethyl-8-ribityllumazine by condensation of 5-amino-6-(D-ribitylamino)uracil with 3,4-dihydroxy-2-butanone 4-phosphate. This is the penultimate step in the biosynthesis of riboflavin. The sequence is that of 6,7-dimethyl-8-ribityllumazine synthase from Neisseria gonorrhoeae (strain ATCC 700825 / FA 1090).